Here is a 146-residue protein sequence, read N- to C-terminus: UPF0310 protein YdcG (146 aa).

It belongs to the UPF0310 family.

The chain is UPF0310 protein YdcG (ydcG) from Bacillus subtilis (strain 168).